We begin with the raw amino-acid sequence, 539 residues long: Chaperonin GroEL (539 aa).

ATP contacts are provided by residues 29-32 (TIGP), 86-90 (DGTTT), glycine 413, 476-478 (NAA), and aspartate 492.

This sequence belongs to the chaperonin (HSP60) family. In terms of assembly, forms a cylinder of 14 subunits composed of two heptameric rings stacked back-to-back. Interacts with the co-chaperonin GroES.

It is found in the cytoplasm. The catalysed reaction is ATP + H2O + a folded polypeptide = ADP + phosphate + an unfolded polypeptide.. Together with its co-chaperonin GroES, plays an essential role in assisting protein folding. The GroEL-GroES system forms a nano-cage that allows encapsulation of the non-native substrate proteins and provides a physical environment optimized to promote and accelerate protein folding. This chain is Chaperonin GroEL, found in Staphylococcus haemolyticus (strain JCSC1435).